A 378-amino-acid polypeptide reads, in one-letter code: Ribosomal RNA large subunit methyltransferase G (378 aa).

Belongs to the methyltransferase superfamily. RlmG family.

It is found in the cytoplasm. It catalyses the reaction guanosine(1835) in 23S rRNA + S-adenosyl-L-methionine = N(2)-methylguanosine(1835) in 23S rRNA + S-adenosyl-L-homocysteine + H(+). In terms of biological role, specifically methylates the guanine in position 1835 (m2G1835) of 23S rRNA. This is Ribosomal RNA large subunit methyltransferase G from Shewanella baltica (strain OS185).